We begin with the raw amino-acid sequence, 142 residues long: Large ribosomal subunit protein uL24 (142 aa).

Polar residues predominate over residues 1 to 11; it reads MKVNPFVSSDS. A disordered region spans residues 1–24; the sequence is MKVNPFVSSDSGKSRKAHFNAPSH.

It belongs to the universal ribosomal protein uL24 family.

In Caenorhabditis elegans, this protein is Large ribosomal subunit protein uL24 (rpl-26).